Reading from the N-terminus, the 324-residue chain is 26S proteasome non-ATPase regulatory subunit 7 (324 aa).

The 136-residue stretch at 9–144 folds into the MPN domain; that stretch reads VVVHPLVLLS…TEAYISVEEV (136 aa). A Glycyl lysine isopeptide (Lys-Gly) (interchain with G-Cter in ubiquitin) cross-link involves residue Lys-180. Lys-204, Lys-214, Lys-316, and Lys-317 each carry N6-acetyllysine. Residues 281 to 324 form a disordered region; the sequence is ANRDAEKKEGQEKEESKKDRKEDKEKDKDKEKSDVKKEEKKEKK.

Belongs to the peptidase M67A family. Component of the 19S proteasome regulatory particle complex. The 26S proteasome consists of a 20S core particle (CP) and two 19S regulatory subunits (RP). The regulatory particle is made of a lid composed of 9 subunits including PSMD7, a base containing 6 ATPases and few additional components. Within the complex, PSMD7 interacts with subunit PSMD4 through their respective MPN domain. Interacts with TRIM5.

Functionally, component of the 26S proteasome, a multiprotein complex involved in the ATP-dependent degradation of ubiquitinated proteins. This complex plays a key role in the maintenance of protein homeostasis by removing misfolded or damaged proteins, which could impair cellular functions, and by removing proteins whose functions are no longer required. Therefore, the proteasome participates in numerous cellular processes, including cell cycle progression, apoptosis, or DNA damage repair. In Homo sapiens (Human), this protein is 26S proteasome non-ATPase regulatory subunit 7 (PSMD7).